The following is a 361-amino-acid chain: mRNA export factor ICP27 homolog (361 aa).

Low complexity predominate over residues 1 to 15; it reads MEDSGNSSGSEASRS. The disordered stretch occupies residues 1–107; the sequence is MEDSGNSSGS…SESARAAVSA (107 aa). Residues 16–36 are compositionally biased toward basic and acidic residues; it reads GSEERRPVRERLGSRPPERRP. The tract at residues 45 to 54 is RGG-box; it reads RRRRGGRGGR. A compositionally biased stretch (basic and acidic residues) spans 80 to 99; sequence RQEADRPDGGPDAPPDRLSE. 4 residues coordinate Zn(2+): C253, H328, C332, and C337. Residues 253–337 form a CHC2-type zinc finger; the sequence is CYLRDTPVDE…HKTGCDAPTC (85 aa).

It belongs to the HHV-1 ICP27 protein family. As to quaternary structure, homodimer. Homodimerization is required for transactivation. Associates in a complex with RNA, and host export factors NXF1/TAP and ALYREF; these interactions allow nuclear export of viral transcripts. Interacts with three host shuttling SR proteins SRSF1, SRSF3 and SRSF7. Interacts with host SRPK1. Interacts with IE62; this interaction enhances IE62 transactivation.

It localises to the host cytoplasm. The protein resides in the host nucleus. Its function is as follows. Multifunctional regulator of the expression of viral genes that mediates nuclear export of viral intronless mRNAs. This immediate early (EI) protein promotes the nuclear export of viral intronless mRNAs by interacting with mRNAs and host NXF1/TAP. This chain is mRNA export factor ICP27 homolog, found in Suid herpesvirus 1 (strain Kaplan) (SuHV-1).